We begin with the raw amino-acid sequence, 189 residues long: Probable nicotinate-nucleotide adenylyltransferase (189 aa).

It belongs to the NadD family.

It catalyses the reaction nicotinate beta-D-ribonucleotide + ATP + H(+) = deamido-NAD(+) + diphosphate. The protein operates within cofactor biosynthesis; NAD(+) biosynthesis; deamido-NAD(+) from nicotinate D-ribonucleotide: step 1/1. Catalyzes the reversible adenylation of nicotinate mononucleotide (NaMN) to nicotinic acid adenine dinucleotide (NaAD). This is Probable nicotinate-nucleotide adenylyltransferase from Hydrogenobaculum sp. (strain Y04AAS1).